A 378-amino-acid chain; its full sequence is Putative gustatory receptor 22f (378 aa).

The Cytoplasmic segment spans residues 1 to 13 (MKMFQPRRGFSCH). The chain crosses the membrane as a helical span at residues 14–34 (LAWFMLQTTLYASWLLGLFPF). The Extracellular segment spans residues 35 to 48 (TFDSRRKQLKRSRW). Residues 49 to 69 (LLLYGFVLHSLAMCLAMSSHL) traverse the membrane as a helical segment. Residues 70-88 (ASKQRRKYNAFERNPLLEK) lie on the Cytoplasmic side of the membrane. The chain crosses the membrane as a helical span at residues 89-109 (IYMQFQVTTFFTISVLLLMNV). The Extracellular portion of the chain corresponds to 110-143 (WKSNTVRKIANELLTLEGQVKDLLTLKNCPNFNC). A helical membrane pass occupies residues 144 to 164 (FVIKKHVAAIGQFVISIYFCL). The Cytoplasmic segment spans residues 165 to 178 (CQENSYPKILKILC). The helical transmembrane segment at 179–199 (CLPSVGLQLIIMHFHTEIILV) threads the bilayer. At 200–245 (YRYVWLVNETLEDSHHLSSSRIHALASLYDRLLKLSELVVACNDLQ) the chain is on the extracellular side. An N-linked (GlcNAc...) asparagine glycan is attached at Asn-207. The helical transmembrane segment at 246 to 266 (LILMLIIYLIGNTVQIFFLIV) threads the bilayer. Over 267-354 (LGVSMNKRYI…LCGLFSINHN (88 aa)) the chain is Cytoplasmic. Residues 355–375 (MGFQMIITSFLYLVYLLQFDF) form a helical membrane-spanning segment. Topologically, residues 376 to 378 (MNL) are extracellular.

Belongs to the insect chemoreceptor superfamily. Gustatory receptor (GR) family. Gr22e subfamily. Taste bristles in the foreleg and labial palps.

The protein localises to the cell membrane. In terms of biological role, probable gustatory receptor which mediates acceptance or avoidance behavior, depending on its substrates. The chain is Putative gustatory receptor 22f (Gr22f) from Drosophila melanogaster (Fruit fly).